We begin with the raw amino-acid sequence, 259 residues long: 5'-nucleotidase SurE (259 aa).

The a divalent metal cation site is built by Asp-13, Asp-14, Ser-44, and Asn-100.

It belongs to the SurE nucleotidase family. Requires a divalent metal cation as cofactor.

The protein resides in the cytoplasm. It carries out the reaction a ribonucleoside 5'-phosphate + H2O = a ribonucleoside + phosphate. Nucleotidase that shows phosphatase activity on nucleoside 5'-monophosphates. In Bacteroides thetaiotaomicron (strain ATCC 29148 / DSM 2079 / JCM 5827 / CCUG 10774 / NCTC 10582 / VPI-5482 / E50), this protein is 5'-nucleotidase SurE.